Reading from the N-terminus, the 130-residue chain is MSMQDTLADMFTRIRNAQMATKETVTMPSSNLKTEVARVLKQEGYINDFTVTEGAKPQLAVTLKYFEGKPVIEHIQRFSKPSLRSYKGKDALPKVADGLGIAIVTTSQGVMTDRAARQAGVGGEVICTVF.

The protein belongs to the universal ribosomal protein uS8 family. As to quaternary structure, part of the 30S ribosomal subunit. Contacts proteins S5 and S12.

Functionally, one of the primary rRNA binding proteins, it binds directly to 16S rRNA central domain where it helps coordinate assembly of the platform of the 30S subunit. In Chromohalobacter salexigens (strain ATCC BAA-138 / DSM 3043 / CIP 106854 / NCIMB 13768 / 1H11), this protein is Small ribosomal subunit protein uS8.